Consider the following 499-residue polypeptide: Interferon regulatory factor 5 (499 aa).

The short motif at 12–18 is the Nuclear localization signal element; it reads PRRVRLK. Positions 14-122 form a DNA-binding region, IRF tryptophan pentad repeat; that stretch reads RVRLKPWLVA…QPYKVYEVCS (109 aa). A disordered region spans residues 121–142; it reads CSNGPAPAESQPSEDNAEEEEE. Residues 145 to 155 carry the Nuclear export signal motif; sequence LQKMLPGLSIT. Phosphoserine; by TBK1 is present on residues Ser-153 and Ser-294. Ser-302 bears the Phosphoserine mark. Glycyl lysine isopeptide (Lys-Gly) (interchain with G-Cter in ubiquitin) cross-links involve residues Lys-412 and Lys-413. Phosphoserine is present on residues Ser-432, Ser-436, Ser-438, Ser-441, and Ser-447.

Belongs to the IRF family. In terms of assembly, homodimer, when phosphorylated. Interacts with TASL (via pLxIS motif); interaction takes place downstream of TLR7, TLR8 or TLR9, leading to its activation. Interacts with MYD88 and TRAF6. Post-translationally, phosphorylation of serine and threonine residues by IKBKB in a C-terminal autoinhibitory region, stimulates dimerization, transport into the nucleus, assembly with the coactivator CBP/EP300 and initiation of transcription. In terms of processing, 'Lys-63'-linked polyubiquitination by TRAF6 is required for activation.

The protein localises to the cytoplasm. It localises to the nucleus. With respect to regulation, maintained as a monomer in an autoinhibited state. Phosphorylation and activation follow the following steps: innate adapter protein TASL recruits IRF5, thereby licensing IRF5 for phosphorylation by IKBKB. Phosphorylated IRF5 dissociates from the adapter proteins, dimerizes, and then enters the nucleus to induce IFNs. Transcription factor that plays a critical role in innate immunity by activating expression of type I interferon (IFN) IFNA and INFB and inflammatory cytokines downstream of endolysosomal toll-like receptors TLR7, TLR8 and TLR9. Regulates the transcription of type I IFN genes (IFN-alpha and IFN-beta) and IFN-stimulated genes (ISG) by binding to an interferon-stimulated response element (ISRE) in their promoters. Can efficiently activate both the IFN-beta (IFNB) and the IFN-alpha (IFNA) genes and mediate their induction downstream of the TLR-activated, MyD88-dependent pathway. The polypeptide is Interferon regulatory factor 5 (Bos taurus (Bovine)).